Here is a 398-residue protein sequence, read N- to C-terminus: Bifunctional enzyme IspD/IspF (398 aa).

The segment at 1–237 is 2-C-methyl-D-erythritol 4-phosphate cytidylyltransferase; sequence MSISIAAIIL…QKKMQMFPDI (237 aa). The interval 238-398 is 2-C-methyl-D-erythritol 2,4-cyclodiphosphate synthase; sequence RVGNGYDVHS…SVLYPGEIPQ (161 aa). 2 residues coordinate a divalent metal cation: aspartate 244 and histidine 246. 4-CDP-2-C-methyl-D-erythritol 2-phosphate is bound by residues 244-246 and 270-271; these read DVH and HS. Histidine 278 lines the a divalent metal cation pocket. Residues 292-294, 368-371, phenylalanine 375, and arginine 378 contribute to the 4-CDP-2-C-methyl-D-erythritol 2-phosphate site; these read DIG and TTNE.

In the N-terminal section; belongs to the IspD/TarI cytidylyltransferase family. IspD subfamily. This sequence in the C-terminal section; belongs to the IspF family. A divalent metal cation serves as cofactor.

It catalyses the reaction 2-C-methyl-D-erythritol 4-phosphate + CTP + H(+) = 4-CDP-2-C-methyl-D-erythritol + diphosphate. The catalysed reaction is 4-CDP-2-C-methyl-D-erythritol 2-phosphate = 2-C-methyl-D-erythritol 2,4-cyclic diphosphate + CMP. The protein operates within isoprenoid biosynthesis; isopentenyl diphosphate biosynthesis via DXP pathway; isopentenyl diphosphate from 1-deoxy-D-xylulose 5-phosphate: step 2/6. It participates in isoprenoid biosynthesis; isopentenyl diphosphate biosynthesis via DXP pathway; isopentenyl diphosphate from 1-deoxy-D-xylulose 5-phosphate: step 4/6. Its function is as follows. Bifunctional enzyme that catalyzes the formation of 4-diphosphocytidyl-2-C-methyl-D-erythritol from CTP and 2-C-methyl-D-erythritol 4-phosphate (MEP) (IspD), and catalyzes the conversion of 4-diphosphocytidyl-2-C-methyl-D-erythritol 2-phosphate (CDP-ME2P) to 2-C-methyl-D-erythritol 2,4-cyclodiphosphate (ME-CPP) with a corresponding release of cytidine 5-monophosphate (CMP) (IspF). The protein is Bifunctional enzyme IspD/IspF of Bartonella tribocorum (strain CIP 105476 / IBS 506).